Here is a 357-residue protein sequence, read N- to C-terminus: Mitogen-activated protein kinase kinase SIPKK (357 aa).

One can recognise a Protein kinase domain in the interval 70–330; it reads FEAVKVIGKG…ANELMRHPFI (261 aa). ATP is bound by residues 76–84 and lysine 99; that span reads IGKGNGGIV. The active-site Proton acceptor is aspartate 192.

Belongs to the protein kinase superfamily. STE Ser/Thr protein kinase family. MAP kinase kinase subfamily. As to quaternary structure, interacts with SIPK.

The enzyme catalyses L-tyrosyl-[protein] + ATP = O-phospho-L-tyrosyl-[protein] + ADP + H(+). It carries out the reaction L-seryl-[protein] + ATP = O-phospho-L-seryl-[protein] + ADP + H(+). It catalyses the reaction L-threonyl-[protein] + ATP = O-phospho-L-threonyl-[protein] + ADP + H(+). Functionally, phosphorylates myelin basic protein (MBP) in vitro. May be involved in disease resistance. In Nicotiana tabacum (Common tobacco), this protein is Mitogen-activated protein kinase kinase SIPKK.